Here is a 488-residue protein sequence, read N- to C-terminus: V-type proton ATPase subunit B 1 (488 aa).

The protein belongs to the ATPase alpha/beta chains family. V-ATPase is a heteromultimeric enzyme composed of a peripheral catalytic V1 complex (main components: subunits A, B, C, D, E, and F) attached to an integral membrane V0 proton pore complex (main component: the proteolipid protein).

Non-catalytic subunit of the peripheral V1 complex of vacuolar ATPase. V-ATPase is responsible for acidifying a variety of intracellular compartments in eukaryotic cells. The protein is V-type proton ATPase subunit B 1 of Gossypium hirsutum (Upland cotton).